Reading from the N-terminus, the 304-residue chain is Flagellin (304 aa).

It belongs to the bacterial flagellin family. Interacts with FliW in a 1:1 complex. Forms a 3-way complex of Hag, FliS and FliW, in which Flis and FliW do not directly interact.

The protein localises to the secreted. The protein resides in the bacterial flagellum. Its subcellular location is the cell wall. Functionally, flagellin is the subunit which polymerizes to form the filaments of bacterial flagella. Assembly into flagella requires FliW. Acts as a homeostatic autoinhibitory regulator to control its own cytoplasmic levels. Partner switching by flagellin between FliW and CsrA provides a flagellar assembly checkpoint to tightly control the timing of flagellin synthesis. Flagellin binds to assembly factor FliW, freeing translation regulator CsrA to repress translation of the flagellin mRNA. When the flagellar hook is assembled flagellin is secreted, depleting intracellular flagellin, which frees FliW to interact with CsrA. This derepresses flagellin translation and provides protein for flagellar assembly. Once the flagellar filament is completed cytoplasmic flagellin levels rise and CsrA translation repression of flagellin reinitiates. The polypeptide is Flagellin (Bacillus subtilis (strain 168)).